A 280-amino-acid chain; its full sequence is Shikimate dehydrogenase (NADP(+)) (280 aa).

Shikimate is bound by residues 18 to 20 (SRS) and T65. Catalysis depends on K69, which acts as the Proton acceptor. 2 residues coordinate shikimate: N90 and D105. NADP(+) is bound by residues 130–134 (GAGGA), 154–159 (NRTLAR), and L219. Y221 is a shikimate binding site. G242 lines the NADP(+) pocket.

This sequence belongs to the shikimate dehydrogenase family. In terms of assembly, homodimer.

It carries out the reaction shikimate + NADP(+) = 3-dehydroshikimate + NADPH + H(+). The protein operates within metabolic intermediate biosynthesis; chorismate biosynthesis; chorismate from D-erythrose 4-phosphate and phosphoenolpyruvate: step 4/7. Involved in the biosynthesis of the chorismate, which leads to the biosynthesis of aromatic amino acids. Catalyzes the reversible NADPH linked reduction of 3-dehydroshikimate (DHSA) to yield shikimate (SA). In Mesorhizobium japonicum (strain LMG 29417 / CECT 9101 / MAFF 303099) (Mesorhizobium loti (strain MAFF 303099)), this protein is Shikimate dehydrogenase (NADP(+)).